The chain runs to 857 residues: Thiamine repressible genes regulatory protein thi5 (857 aa).

Residues 38–64 (CLSCRAKKIRCSGSEPCQACIATPSQC) constitute a DNA-binding region (zn(2)-C6 fungal-type). Disordered stretches follow at residues 152 to 175 (AVKS…NFSS) and 797 to 819 (GHAL…HPSQ). Over residues 159 to 175 (SFPSSSTPPSSDSNFSS) the composition is skewed to low complexity. The span at 803–819 (PESNNSSNSFKPSHPSQ) shows a compositional bias: polar residues.

Its subcellular location is the nucleus. Its function is as follows. Transcription factor that activates the nmt1 promoter. Regulation of thiamine repressible genes. Negatively regulates conjugation during meiosis, by inducing negative regulators which delay conjugation. Involved in thi1 regulation. This Schizosaccharomyces pombe (strain 972 / ATCC 24843) (Fission yeast) protein is Thiamine repressible genes regulatory protein thi5 (thi5).